Here is a 164-residue protein sequence, read N- to C-terminus: R-phycoerythrin alpha chain (164 aa).

Cysteine 82 and cysteine 139 together coordinate (2R,3E)-phycoerythrobilin.

The protein belongs to the phycobiliprotein family. Heterodimer of an alpha and a beta chain. In terms of processing, contains two covalently linked bilin chromophores.

The protein resides in the plastid. It localises to the chloroplast thylakoid membrane. Light-harvesting photosynthetic bile pigment-protein from the phycobiliprotein complex. This is R-phycoerythrin alpha chain (cpeA) from Pyropia tenera (Nori).